A 427-amino-acid polypeptide reads, in one-letter code: Glutamate-1-semialdehyde 2,1-aminomutase (427 aa).

The residue at position 267 (lysine 267) is an N6-(pyridoxal phosphate)lysine.

Belongs to the class-III pyridoxal-phosphate-dependent aminotransferase family. HemL subfamily. As to quaternary structure, homodimer. Requires pyridoxal 5'-phosphate as cofactor.

The protein localises to the cytoplasm. The enzyme catalyses (S)-4-amino-5-oxopentanoate = 5-aminolevulinate. It functions in the pathway porphyrin-containing compound metabolism; protoporphyrin-IX biosynthesis; 5-aminolevulinate from L-glutamyl-tRNA(Glu): step 2/2. This is Glutamate-1-semialdehyde 2,1-aminomutase from Geotalea daltonii (strain DSM 22248 / JCM 15807 / FRC-32) (Geobacter daltonii).